A 164-amino-acid polypeptide reads, in one-letter code: Transcription elongation factor GreA (164 aa).

The protein belongs to the GreA/GreB family.

In terms of biological role, necessary for efficient RNA polymerase transcription elongation past template-encoded arresting sites. The arresting sites in DNA have the property of trapping a certain fraction of elongating RNA polymerases that pass through, resulting in locked ternary complexes. Cleavage of the nascent transcript by cleavage factors such as GreA or GreB allows the resumption of elongation from the new 3'terminus. GreA releases sequences of 2 to 3 nucleotides. The polypeptide is Transcription elongation factor GreA (Helicobacter pylori (strain Shi470)).